A 1080-amino-acid chain; its full sequence is ATP-dependent helicase/deoxyribonuclease subunit B (1080 aa).

It belongs to the helicase family. AddB/RexB type 2 subfamily. Heterodimer of AddA and RexB. The cofactor is Mg(2+).

In terms of biological role, the heterodimer acts as both an ATP-dependent DNA helicase and an ATP-dependent, dual-direction single-stranded exonuclease. Recognizes the chi site generating a DNA molecule suitable for the initiation of homologous recombination. This subunit has 5' -&gt; 3' nuclease activity but not helicase activity. This chain is ATP-dependent helicase/deoxyribonuclease subunit B, found in Streptococcus mutans serotype c (strain ATCC 700610 / UA159).